The primary structure comprises 423 residues: Flotillin-1 (423 aa).

This sequence belongs to the band 7/mec-2 family. Flotillin subfamily. As to quaternary structure, heterooligomeric complex of flotillin-1 and flotillin-2 and caveolin-1 and caveolin-2. Normally expressed in growing retinal exons of newly differentiated ganglion cells at the retinal margin. After optic nerve injury, expressed in all retinal ganglion cells and retinal axons. Also expressed in endothelial cells, spinal cord, larval and adult skin, muscle processes, thymus and gill macrophages.

Its subcellular location is the cell membrane. It localises to the endosome. The protein resides in the membrane. The protein localises to the caveola. It is found in the melanosome. Its subcellular location is the membrane raft. In terms of biological role, may act as a scaffolding protein within caveolar membranes, functionally participating in formation of caveolae or caveolae-like vesicles. In Carassius auratus (Goldfish), this protein is Flotillin-1 (flot1).